Reading from the N-terminus, the 2178-residue chain is Toxin A (2178 aa).

The four-helical bundle stretch occupies residues 1–93; it reads MLITREQLMK…RELIKNSRTS (93 aa). Residues 98–474 form the GT44 domain; that stretch reads KNLSFIWIGG…KPEVNSTVFF (377 aa). The segment at 98-474 is glucosyltransferase region; that stretch reads KNLSFIWIGG…KPEVNSTVFF (377 aa). The segment at 98–474 is N-acetylglucosaminyltransferase region; the sequence is KNLSFIWIGG…KPEVNSTVFF (377 aa). Residues 103–105, asparagine 141, 267–271, and 284–286 each bind UDP-N-acetyl-alpha-D-glucosamine; these read IWI, SDILR, and DLD. Residues aspartate 284, aspartate 286, and glutamate 520 each contribute to the Mg(2+) site. 523–525 lines the UDP-N-acetyl-alpha-D-glucosamine pocket; the sequence is SSW. Residues 549-806 form an autoprocessing region region; sequence NYEDGLNFNK…RVEQLNKVAE (258 aa). Residues asparagine 557, lysine 607, and lysine 651 each coordinate 1D-myo-inositol hexakisphosphate. The Peptidase C80 domain occupies 574–787; the sequence is VNSTKIYENY…QISNKYVVYW (214 aa). Catalysis depends on histidine 657, which acts as the For protease activity. Cysteine 707 functions as the Nucleophile; for protease activity in the catalytic mechanism. 1D-myo-inositol hexakisphosphate contacts are provided by residues 758–759 and lysine 782; that span reads KR. Residues 807 to 1485 are translocation region; it reads FAKDINSIIQ…VYMEGKIFLN (679 aa). Cell wall-binding repeat units follow at residues 1799–1818, 1820–1839, 1870–1889, 1890–1909, 1910–1929, 1931–1950, 1951–1970, 2004–2023, 2024–2043, 2045–2060, 2064–2083, 2114–2133, 2134–2153, and 2155–2174; these read EYGWINIDSRWYFFDSINLI, KKGYQEIEGERYYFNPNTGV, YTGWLTLDGNKYYFQSNSKA, VTGLQKISDKYYYFNDNGQM, QIKWQIINNNKYYFDGNTGE, IIGWFNNNKERYYFDSEGRL, LTGYQVIGDKSYYFSDNING, YKGWLDLNGNKYYFNSDSIA, VTGSYNIKGIQYYFNPKTAV, TNGWYTLDNNNYYVSN, VLGYQDIDGKGYYFDPSTGI, YTGWLHLNGNKYYFGYYNSA, VTGWRVLGGKRYFFNIKTGA, and TTGLLTLSGKRYYFNEKGEQ.

The protein belongs to the clostridial glucosylating toxin (LCGT) family. Mn(2+) serves as cofactor. The cofactor is Mg(2+). Post-translationally, undergoes autocatalytic cleavage to release the N-terminal part (N-acetylglucosaminyltransferase TcdA), which constitutes the active part of the toxin, in the host cytosol. 1D-myo-inositol hexakisphosphate-binding (InsP6) activates the peptidase C80 domain and promotes autoprocessing.

It is found in the secreted. The protein localises to the host endosome membrane. The protein resides in the host cytoplasm. Its subcellular location is the host cytosol. It localises to the host cell membrane. The catalysed reaction is L-threonyl-[protein] + UDP-N-acetyl-alpha-D-glucosamine = 3-O-(N-acetyl-alpha-D-glucosaminyl)-L-threonyl-[protein] + UDP + H(+). With respect to regulation, protease activity is activated upon binding to 1D-myo-inositol hexakisphosphate (InsP6), which induces conformational reorganization. Precursor of a cytotoxin, which enters into host cells and mediates autoprocessing to release the active toxin (N-acetylglucosaminyltransferase TcdA) into the host cytosol. Once entered into host cells, acidification in the endosome promotes the membrane insertion of the translocation region and formation of a pore, leading to translocation of the GT44 and peptidase C80 domains across the endosomal membrane. This activates the peptidase C80 domain and autocatalytic processing, releasing the N-terminal part (N-acetylglucosaminyltransferase TcdA), which constitutes the active part of the toxin, in the cytosol. Functionally, active form of the toxin, which is released into the host cytosol following autoprocessing and inactivates small GTPases. Acts by mediating monoglycosylation of small GTPases of the Rho family (Rac1, RhoA, RhoG and Cdc42) in host cells at the conserved threonine residue located in the switch I region ('Thr-37/35'), using UDP-N-acetyl-alpha-D-glucosamine as the sugar donor. Monoglycosylation of host small GTPases completely prevents the recognition of the downstream effector, blocking the GTPases in their inactive form, leading to actin cytoskeleton disruption and cell death. The protein is Toxin A (tcdA) of Clostridium novyi.